Consider the following 401-residue polypeptide: 2,3,4,5-tetrahydropyridine-2,6-dicarboxylate N-succinyltransferase (401 aa).

The active-site Acyl-anhydride intermediate is the E269. Residues R271, G286, S289, A312, 327–328 (DA), G335, and K364 each bind succinyl-CoA.

It belongs to the type 2 tetrahydrodipicolinate N-succinyltransferase family. As to quaternary structure, homotrimer.

It is found in the cytoplasm. The enzyme catalyses (S)-2,3,4,5-tetrahydrodipicolinate + succinyl-CoA + H2O = (S)-2-succinylamino-6-oxoheptanedioate + CoA. The protein operates within amino-acid biosynthesis; L-lysine biosynthesis via DAP pathway; LL-2,6-diaminopimelate from (S)-tetrahydrodipicolinate (succinylase route): step 1/3. Its function is as follows. Catalyzes the conversion of the cyclic tetrahydrodipicolinate (THDP) into the acyclic N-succinyl-L-2-amino-6-oxopimelate using succinyl-CoA. The sequence is that of 2,3,4,5-tetrahydropyridine-2,6-dicarboxylate N-succinyltransferase from Helicobacter pylori (strain ATCC 700392 / 26695) (Campylobacter pylori).